The sequence spans 131 residues: Guanyl-specific ribonuclease F1 (131 aa).

The first 25 residues, 1 to 25 (MLFFKSIASLAALVSLAVASPIESR), serve as a signal peptide directing secretion. Gln26 bears the Pyrrolidone carboxylic acid mark. 2 disulfides stabilise this stretch: Cys31-Cys127 and Cys49-Cys108. The active site involves His65. The active-site Proton acceptor is Glu83. His116 (proton donor) is an active-site residue.

It belongs to the ribonuclease N1/T1 family.

The enzyme catalyses [RNA] containing guanosine + H2O = an [RNA fragment]-3'-guanosine-3'-phosphate + a 5'-hydroxy-ribonucleotide-3'-[RNA fragment].. The polypeptide is Guanyl-specific ribonuclease F1 (Fusarium fujikuroi (Bakanae and foot rot disease fungus)).